A 75-amino-acid chain; its full sequence is Small ribosomal subunit protein bS16 (75 aa).

The protein belongs to the bacterial ribosomal protein bS16 family.

The protein is Small ribosomal subunit protein bS16 of Campylobacter hominis (strain ATCC BAA-381 / DSM 21671 / CCUG 45161 / LMG 19568 / NCTC 13146 / CH001A).